A 308-amino-acid polypeptide reads, in one-letter code: ADP-L-glycero-D-manno-heptose-6-epimerase (308 aa).

NADP(+) is bound by residues 10–11 (FI), 31–32 (DN), lysine 38, lysine 53, 75–79 (EGACS), and asparagine 92. The active-site Proton acceptor is tyrosine 139. Lysine 143 serves as a coordination point for NADP(+). Asparagine 168 is a binding site for substrate. The NADP(+) site is built by valine 169 and lysine 177. Lysine 177 (proton acceptor) is an active-site residue. Residues serine 179, histidine 186, 200-203 (FAGS), arginine 208, and tyrosine 271 contribute to the substrate site.

It belongs to the NAD(P)-dependent epimerase/dehydratase family. HldD subfamily. In terms of assembly, homopentamer. The cofactor is NADP(+).

The enzyme catalyses ADP-D-glycero-beta-D-manno-heptose = ADP-L-glycero-beta-D-manno-heptose. It participates in nucleotide-sugar biosynthesis; ADP-L-glycero-beta-D-manno-heptose biosynthesis; ADP-L-glycero-beta-D-manno-heptose from D-glycero-beta-D-manno-heptose 7-phosphate: step 4/4. Catalyzes the interconversion between ADP-D-glycero-beta-D-manno-heptose and ADP-L-glycero-beta-D-manno-heptose via an epimerization at carbon 6 of the heptose. The sequence is that of ADP-L-glycero-D-manno-heptose-6-epimerase from Haemophilus influenzae (strain PittGG).